A 230-amino-acid polypeptide reads, in one-letter code: Acyl-protein thioesterase 1 (230 aa).

Catalysis depends on charge relay system residues Ser119, Asp174, and His208. Residue Lys224 is modified to N6-acetyllysine.

Belongs to the AB hydrolase superfamily. AB hydrolase 2 family. As to quaternary structure, homodimer.

The protein localises to the cytoplasm. Its subcellular location is the cell membrane. It localises to the nucleus membrane. It is found in the endoplasmic reticulum. It carries out the reaction S-hexadecanoyl-L-cysteinyl-[protein] + H2O = L-cysteinyl-[protein] + hexadecanoate + H(+). It catalyses the reaction 1-hexadecanoyl-sn-glycero-3-phosphocholine + H2O = sn-glycerol 3-phosphocholine + hexadecanoate + H(+). The catalysed reaction is a 1-(9Z-octadecenoyl)-2-acyl-sn-glycero-3-phosphocholine + H2O = a 2-acyl-sn-glycero-3-phosphocholine + (9Z)-octadecenoate + H(+). Functionally, acts as an acyl-protein thioesterase. Hydrolyzes fatty acids from S-acylated cysteine residues in proteins such as trimeric G alpha proteins or HRAS. Acts as a palmitoyl thioesterase that catalyzes depalmitoylation of proteins, such as ADRB2, KCNMA1 and SQSTM1. Acts as a negative regulator of autophagy by mediating palmitoylation of SQSTM1, decreasing affinity between SQSTM1 and ATG8 proteins and recruitment of ubiquitinated cargo proteins to autophagosomes. Acts as a lysophospholipase and hydrolyzes lysophosphatidylcholine (lyso-PC). Also hydrolyzes lysophosphatidylethanolamine (lyso-PE), lysophosphatidylinositol (lyso-PI) and lysophosphatidylserine (lyso-PS). Has much higher thioesterase activity than lysophospholipase activity. Contributes to the production of lysophosphatidic acid (LPA) during blood coagulation by recognizing and cleaving plasma phospholipids to generate lysophospholipids which in turn act as substrates for ENPP2 to produce LPA. The polypeptide is Acyl-protein thioesterase 1 (LYPLA1) (Pongo abelii (Sumatran orangutan)).